The primary structure comprises 164 residues: UPF0304 protein MS2240 (164 aa).

This sequence belongs to the UPF0304 family.

This Mannheimia succiniciproducens (strain KCTC 0769BP / MBEL55E) protein is UPF0304 protein MS2240.